Reading from the N-terminus, the 796-residue chain is Exocyst complex component 3 (796 aa).

Positions Pro-87 to Leu-174 form a coiled coil.

The protein belongs to the SEC6 family. The exocyst complex is composed of sec-3/exoc1, sec-5/exoc2, sec-6/exoc3, sec-8/exoc4, sec-10/exoc5, sec-15/exoc6, exo-70/exoc7 and exo-84/exoc8.

Its function is as follows. Component of the exocyst complex involved in the docking of exocytic vesicles with fusion sites on the plasma membrane. In Caenorhabditis elegans, this protein is Exocyst complex component 3 (sec-6).